The chain runs to 196 residues: UPF0056 membrane protein BU449 (196 aa).

The next 6 membrane-spanning stretches (helical) occupy residues 8–28, 45–65, 71–91, 105–125, 134–154, and 174–194; these read TILLVLIMDPLGNLPIFMTIL, IIALIVMLLFLFVGEKILIIL, TVSISGGVILFLIAIKMIFPS, FLVPLAIPLVAGPSLLATLML, MFYLVGSLLISWFFTVIILLS, and MGLVLIMLSTQMFLDGIRAWF.

It belongs to the UPF0056 (MarC) family.

The protein localises to the cell membrane. This is UPF0056 membrane protein BU449 from Buchnera aphidicola subsp. Acyrthosiphon pisum (strain APS) (Acyrthosiphon pisum symbiotic bacterium).